The following is a 292-amino-acid chain: tRNA dimethylallyltransferase (292 aa).

5 to 12 (APTGAGKT) is an ATP binding site. A substrate-binding site is contributed by 7–12 (TGAGKT). The tract at residues 29–32 (DSRQ) is interaction with substrate tRNA.

The protein belongs to the IPP transferase family. As to quaternary structure, monomer. Mg(2+) serves as cofactor.

It carries out the reaction adenosine(37) in tRNA + dimethylallyl diphosphate = N(6)-dimethylallyladenosine(37) in tRNA + diphosphate. Its function is as follows. Catalyzes the transfer of a dimethylallyl group onto the adenine at position 37 in tRNAs that read codons beginning with uridine, leading to the formation of N6-(dimethylallyl)adenosine (i(6)A). This Leptospira borgpetersenii serovar Hardjo-bovis (strain JB197) protein is tRNA dimethylallyltransferase.